Consider the following 209-residue polypeptide: MSKVIEINHPLILHKLAILRDEKTGSKDFRKLVEEISMLMAYEVTRDLNTEEVEVKTPVAVTKCKMLSGKKMAVVPILRAGLGMVDGVLNLIPAAKVGHIGLYRDEKTLQPVEYFCKMPQDIAERDIIVVDPMLATGGSAIDALTMLKNRGAKNLKLMCLVGAPEGIEAIKKAHDDVDIYLASIDEKLNEHGYIVPGLGDAGDRLFGTK.

5-phospho-alpha-D-ribose 1-diphosphate-binding positions include Arg-79, Arg-104, and 131-139; that span reads DPMLATGGS. Uracil contacts are provided by residues Ile-194 and 199 to 201; that span reads GDA. Asp-200 lines the 5-phospho-alpha-D-ribose 1-diphosphate pocket.

It belongs to the UPRTase family. Requires Mg(2+) as cofactor.

The enzyme catalyses UMP + diphosphate = 5-phospho-alpha-D-ribose 1-diphosphate + uracil. It participates in pyrimidine metabolism; UMP biosynthesis via salvage pathway; UMP from uracil: step 1/1. With respect to regulation, allosterically activated by GTP. Functionally, catalyzes the conversion of uracil and 5-phospho-alpha-D-ribose 1-diphosphate (PRPP) to UMP and diphosphate. This chain is Uracil phosphoribosyltransferase, found in Clostridium beijerinckii (strain ATCC 51743 / NCIMB 8052) (Clostridium acetobutylicum).